A 50-amino-acid polypeptide reads, in one-letter code: Temporin-SHc (50 aa).

The N-terminal stretch at 1–10 is a signal peptide; it reads FLGTINLSLC. The propeptide occupies 11–35; it reads EQERDADEEERRDEPDGSNVEVEKR. A Phenylalanine amide modification is found at F48.

Expressed by the skin glands.

The protein resides in the secreted. It is found in the target cell membrane. In terms of biological role, amphipathic alpha-helical antimicrobial peptide with potent activity against some Gram-positive bacteria (MIC=4-&gt;80 uM), potent activity against fungi (MIC=10-20 uM), and no activity against Gram-negative bacteria. Does not display anti-leishmania activity. Does not show hemolytic activity (LC(50)&gt;80 uM). The protein is Temporin-SHc of Pelophylax saharicus (Sahara frog).